The chain runs to 360 residues: MSERKRRLMVMAGGTGGHVFPGLAVAHYLQSQGWDIRWLGTADRMEAQLVPKHGIEIEYIRISGLRGKGVKALIAAPIRIIKAIFQARRIMKRYQPDAVLGMGGYVSGPGGVAAWSCGIPVVLHEQNGIAGLTNRWLSKIAKRVLQAFPGAFANAPVVGNPVRDDVLALEAPAERLKGREGAVRVLVIGGSQGARILNHTMPVVAGLLGERVTIWHQAGKGSESDTKLRYQNELSKNSVKSEYKVTEFIDDIAQAYQWADVVVCRSGALTVSEIAAAGLPAIFVPFQHKDRQQYWNALPLENAGAARIIEQNDLTPEAIADTLENWDRHQLMLMAEKAQSVAITDATERVANVIIEVAKK.

UDP-N-acetyl-alpha-D-glucosamine contacts are provided by residues 15–17, Asn127, Arg163, Ser191, Ile249, 268–273, and Gln293; these read TGG and ALTVSE.

This sequence belongs to the glycosyltransferase 28 family. MurG subfamily.

Its subcellular location is the cell inner membrane. The enzyme catalyses di-trans,octa-cis-undecaprenyl diphospho-N-acetyl-alpha-D-muramoyl-L-alanyl-D-glutamyl-meso-2,6-diaminopimeloyl-D-alanyl-D-alanine + UDP-N-acetyl-alpha-D-glucosamine = di-trans,octa-cis-undecaprenyl diphospho-[N-acetyl-alpha-D-glucosaminyl-(1-&gt;4)]-N-acetyl-alpha-D-muramoyl-L-alanyl-D-glutamyl-meso-2,6-diaminopimeloyl-D-alanyl-D-alanine + UDP + H(+). It functions in the pathway cell wall biogenesis; peptidoglycan biosynthesis. Functionally, cell wall formation. Catalyzes the transfer of a GlcNAc subunit on undecaprenyl-pyrophosphoryl-MurNAc-pentapeptide (lipid intermediate I) to form undecaprenyl-pyrophosphoryl-MurNAc-(pentapeptide)GlcNAc (lipid intermediate II). This is UDP-N-acetylglucosamine--N-acetylmuramyl-(pentapeptide) pyrophosphoryl-undecaprenol N-acetylglucosamine transferase from Proteus mirabilis (strain HI4320).